Consider the following 146-residue polypeptide: Anti-sigma F factor (146 aa).

It belongs to the anti-sigma-factor family.

It carries out the reaction L-seryl-[protein] + ATP = O-phospho-L-seryl-[protein] + ADP + H(+). It catalyses the reaction L-threonyl-[protein] + ATP = O-phospho-L-threonyl-[protein] + ADP + H(+). Binds to sigma F and blocks its ability to form an RNA polymerase holoenzyme (E-sigma F). Phosphorylates SpoIIAA on a serine residue. This phosphorylation may enable SpoIIAA to act as an anti-anti-sigma factor that counteracts SpoIIAB and thus releases sigma F from inhibition. The polypeptide is Anti-sigma F factor (Bacillus cereus (strain ATCC 14579 / DSM 31 / CCUG 7414 / JCM 2152 / NBRC 15305 / NCIMB 9373 / NCTC 2599 / NRRL B-3711)).